The sequence spans 419 residues: MSQPSDSTAPLQGSARDREIVEARVIVTCPGRNFVTLKIRTRSGITGVGDATLNGRELAVAAYLQEHLVPNLIGRDAGRIEDIWQFFYRGAYWRRGPVTMSAIAAVDVALWDILGKMAGMPLYQLLGGRSREGALVYGHANGRDIAETSDEVGRFREMGFIAIRAQCGVPGIKKTYGISVGGKPYEPAESELPTETVWSTPRYLGVVPRLFEQLRADHGDEIELLHDAHHRLTPIEAARLGRDLEPYRLFWLEDATPAENQRAFEIIRQHTVTPLAVGEVFNSIWDCKHLIEQQLIDYIRTTIVHAGGLTHVRRLADFAALHQVRTGFHGATDLSPVCMGAALHFDTWVPNFGIQEYMFHSDEANAVFPHDYQFRAGRLHCGETPGHGVDIDEALAARYPYTPKQLPILRLEDGTMGDW.

2 residues coordinate substrate: N54 and H139. Y176 acts as the Proton donor/acceptor in catalysis. D227 serves as a coordination point for Mg(2+). The Proton donor/acceptor role is filled by H229. Mg(2+) is bound by residues E253 and E279. Substrate is bound by residues E279, R300, H329, D333, and E356.

The protein belongs to the mandelate racemase/muconate lactonizing enzyme family. GalD subfamily. The cofactor is Mg(2+).

The catalysed reaction is D-mannonate = 2-dehydro-3-deoxy-D-gluconate + H2O. The protein operates within carbohydrate metabolism; pentose and glucuronate interconversion. Catalyzes the dehydration of D-mannonate. Has no detectable activity with a panel of 70 other acid sugars (in vitro). The polypeptide is D-mannonate dehydratase (Xanthomonas oryzae pv. oryzicola (strain BLS256)).